Reading from the N-terminus, the 375-residue chain is Probable UDP-N-acetylglucosamine 2-epimerase (375 aa).

This sequence belongs to the UDP-N-acetylglucosamine 2-epimerase family.

Its subcellular location is the cytoplasm. It carries out the reaction UDP-N-acetyl-alpha-D-glucosamine = UDP-N-acetyl-alpha-D-mannosamine. The protein operates within glycan metabolism; exopolysaccharide EPS I biosynthesis. In terms of biological role, may be involved in synthesis of N-acetyltrideoxygalactose, a component of exopolysaccharide EPS I which functions as a virulence factor. This is Probable UDP-N-acetylglucosamine 2-epimerase (epsC) from Ralstonia nicotianae (strain ATCC BAA-1114 / GMI1000) (Ralstonia solanacearum).